The following is a 55-amino-acid chain: Chromatin protein Cren7 (55 aa).

It belongs to the Cren7 family. Monomer. In terms of processing, methylated at multiple sites, to varying extents.

The protein resides in the chromosome. The protein localises to the cytoplasm. In terms of biological role, a chromatin protein, binds double-stranded DNA without sequence specificity. Constrains negative DNA supercoils. In Ignicoccus hospitalis (strain KIN4/I / DSM 18386 / JCM 14125), this protein is Chromatin protein Cren7.